The primary structure comprises 308 residues: Very-long-chain enoyl-CoA reductase (308 aa).

At 1-86 (MKHYEVEILD…YFRDLGAQIS (86 aa)) the chain is on the cytoplasmic side. Lysine 22 is modified (N6-acetyllysine). At serine 58 the chain carries Phosphoserine. N6-acetyllysine is present on lysine 60. Residues 87-106 (WVTVFLTEYAGPLFIYLLFY) form a helical membrane-spanning segment. Over 107 to 124 (FRVPFIYGHKYDFTSSRH) the chain is Lumenal. Residues 125-147 (TVVHLACICHSFHYIKRLLETLF) traverse the membrane as a helical segment. The Cytoplasmic portion of the chain corresponds to 148 to 158 (VHRFSHGTMPL). A helical transmembrane segment spans residues 159–180 (RNIFKNCTYYWGFAAWMAYYIN). Over 181-189 (HPLYTPPTY) the chain is Lumenal. A helical membrane pass occupies residues 190 to 216 (GAQQVKLALAIFVICQLGNFSIHMALR). Topologically, residues 217–245 (DLRPAGSKTRKIPYPTKNPFTWLFLLVSC) are cytoplasmic. Residues 246–262 (PNYTYEVGSWIGFAIMT) form a helical membrane-spanning segment. Residues 263–264 (QC) lie on the Lumenal side of the membrane. The chain crosses the membrane as a helical span at residues 265–292 (LPVALFSLVGFTQMTIWAKGKHRSYLKE). Topologically, residues 293 to 308 (FRDYPPLRMPIIPFLL) are cytoplasmic.

This sequence belongs to the steroid 5-alpha reductase family. Interacts with ELOVL1 and LASS2. Interacts with HACD1 and HACD2 (via the third lumenal loop), but not with HACD3 and HACD4. Interacts with ELOVL1, ELOVL2, ELOVL3, ELOVL5 and ELOVL7 in the presence of acyl-CoA; interaction with HACD1/2 and that with ELOVLs are mutually exclusive. Glycosylated. In terms of tissue distribution, expressed in most tissues tested. Highly expressed in skeletal muscle.

The protein localises to the endoplasmic reticulum membrane. It catalyses the reaction a very-long-chain 2,3-saturated fatty acyl-CoA + NADP(+) = a very-long-chain (2E)-enoyl-CoA + NADPH + H(+). The catalysed reaction is octadecanoyl-CoA + NADP(+) = (2E)-octadecenoyl-CoA + NADPH + H(+). It carries out the reaction (2E,7Z,10Z,13Z,16Z)-docosapentaenoyl-CoA + NADPH + H(+) = (7Z,10Z,13Z,16Z)-docosatetraenoyl-CoA + NADP(+). The enzyme catalyses (2E,7Z,10Z,13Z,16Z,19Z)-docosahexaenoyl-CoA + NADPH + H(+) = (7Z,10Z,13Z,16Z,19Z)-docosapentaenoyl-CoA + NADP(+). It catalyses the reaction (2E,8Z,11Z,14Z)-eicosatetraenoyl-CoA + NADPH + H(+) = (8Z,11Z,14Z)-eicosatrienoyl-CoA + NADP(+). The catalysed reaction is (2E)-hexadecenoyl-CoA + NADPH + H(+) = hexadecanoyl-CoA + NADP(+). The protein operates within lipid metabolism; fatty acid biosynthesis. It participates in lipid metabolism; sphingolipid metabolism. In terms of biological role, involved in both the production of very long-chain fatty acids for sphingolipid synthesis and the degradation of the sphingosine moiety in sphingolipids through the sphingosine 1-phosphate metabolic pathway. Catalyzes the last of the four reactions of the long-chain fatty acids elongation cycle. This endoplasmic reticulum-bound enzymatic process, allows the addition of 2 carbons to the chain of long- and very long-chain fatty acids/VLCFAs per cycle. This enzyme reduces the trans-2,3-enoyl-CoA fatty acid intermediate to an acyl-CoA that can be further elongated by entering a new cycle of elongation. Thereby, it participates in the production of VLCFAs of different chain lengths that are involved in multiple biological processes as precursors of membrane lipids and lipid mediators. Catalyzes the saturation step of the sphingosine 1-phosphate metabolic pathway, the conversion of trans-2-hexadecenoyl-CoA to palmitoyl-CoA. The polypeptide is Very-long-chain enoyl-CoA reductase (TECR) (Homo sapiens (Human)).